The primary structure comprises 104 residues: Large ribosomal subunit protein uL24 (104 aa).

It belongs to the universal ribosomal protein uL24 family. Part of the 50S ribosomal subunit.

One of two assembly initiator proteins, it binds directly to the 5'-end of the 23S rRNA, where it nucleates assembly of the 50S subunit. In terms of biological role, one of the proteins that surrounds the polypeptide exit tunnel on the outside of the subunit. This Cronobacter sakazakii (strain ATCC BAA-894) (Enterobacter sakazakii) protein is Large ribosomal subunit protein uL24.